Here is a 365-residue protein sequence, read N- to C-terminus: tRNA N6-adenosine threonylcarbamoyltransferase (365 aa).

The Fe cation site is built by histidine 119 and histidine 123. Substrate is bound by residues 141–145, aspartate 174, and glycine 187; that span reads LVSGG. The disordered stretch occupies residues 184–203; that stretch reads QPGGPSVEGEARQGDPKRFR. Residues 192–201 are compositionally biased toward basic and acidic residues; the sequence is GEARQGDPKR. Residue asparagine 289 participates in substrate binding. Position 317 (aspartate 317) interacts with Fe cation. The segment at 342–365 is disordered; it reads ARPRWPLDQSSPAMLGSGKKGAKA.

The protein belongs to the KAE1 / TsaD family. Fe(2+) serves as cofactor.

It is found in the cytoplasm. The catalysed reaction is L-threonylcarbamoyladenylate + adenosine(37) in tRNA = N(6)-L-threonylcarbamoyladenosine(37) in tRNA + AMP + H(+). Required for the formation of a threonylcarbamoyl group on adenosine at position 37 (t(6)A37) in tRNAs that read codons beginning with adenine. Is involved in the transfer of the threonylcarbamoyl moiety of threonylcarbamoyl-AMP (TC-AMP) to the N6 group of A37, together with TsaE and TsaB. TsaD likely plays a direct catalytic role in this reaction. This Ruegeria pomeroyi (strain ATCC 700808 / DSM 15171 / DSS-3) (Silicibacter pomeroyi) protein is tRNA N6-adenosine threonylcarbamoyltransferase.